Consider the following 249-residue polypeptide: Small ribosomal subunit protein uS3 (249 aa).

The 69-residue stretch at 39–107 (VRAMLKKRLY…EVHLNIVEIR (69 aa)) folds into the KH type-2 domain. The tract at residues 215–249 (LDKRLATESGPAGEGGGRERGDRPDRGDRGRRDRG) is disordered. The span at 230-249 (GGRERGDRPDRGDRGRRDRG) shows a compositional bias: basic and acidic residues.

It belongs to the universal ribosomal protein uS3 family. Part of the 30S ribosomal subunit. Forms a tight complex with proteins S10 and S14.

Functionally, binds the lower part of the 30S subunit head. Binds mRNA in the 70S ribosome, positioning it for translation. This is Small ribosomal subunit protein uS3 from Caulobacter sp. (strain K31).